We begin with the raw amino-acid sequence, 1061 residues long: Atrial natriuretic peptide receptor 1 (1061 aa).

Positions 1–32 (MPGPRRPAGSRLRLLLLLLLPPLLLLLRGSHA) are cleaved as a signal peptide. Topologically, residues 33–473 (GNLTVAVVLP…CNQDHLSTLE (441 aa)) are extracellular. N34 and N45 each carry an N-linked (GlcNAc...) asparagine glycan. Residues S85, G117, and C118 each contribute to the chloride site. Disulfide bonds link C92–C118 and C196–C245. N-linked (GlcNAc...) asparagine glycosylation is found at N212, N338, N379, N386, and N427. A disulfide bridge links C455 with C464. Residues 474-494 (VLALVGSLSLLGILIVSFFIY) traverse the membrane as a helical segment. At 495 to 1061 (RKMQLEKELA…LGERGSSTRG (567 aa)) the chain is on the cytoplasmic side. Phosphoserine occurs at positions 519 and 529. One can recognise a Protein kinase domain in the interval 528–805 (GSRLTLSGRG…QIRLTLRKFN (278 aa)). T532 is modified (phosphothreonine). S534, S538, and S542 each carry phosphoserine. The residue at position 545 (T545) is a Phosphothreonine. The 131-residue stretch at 876–1006 (TIYFSDIVGF…DTVNTASRME (131 aa)) folds into the Guanylate cyclase domain.

It belongs to the adenylyl cyclase class-4/guanylyl cyclase family. As to quaternary structure, homodimer. Post-translationally, phosphorylation of the protein kinase-like domain is required for full activation by ANP.

Its subcellular location is the membrane. It catalyses the reaction GTP = 3',5'-cyclic GMP + diphosphate. Receptor for the atrial natriuretic peptide NPPA/ANP and the brain natriuretic peptide NPPB/BNP which are potent vasoactive hormones playing a key role in cardiovascular homeostasis. Plays an essential role in the regulation of endothelial cell senescence and vascular aging. Upon activation by ANP or BNP, stimulates the production of cyclic guanosine monophosphate (cGMP) that promotes vascular tone and volume homeostasis by activation of protein kinase cGMP-dependent 1/PRKG1 and subsequently PRKAA1, thereby controlling blood pressure and maintaining cardiovascular homeostasis. This is Atrial natriuretic peptide receptor 1 from Homo sapiens (Human).